Reading from the N-terminus, the 478-residue chain is Protein nucleotidyltransferase YdiU (478 aa).

8 residues coordinate ATP: glycine 84, glycine 86, arginine 87, lysine 107, aspartate 119, glycine 120, arginine 170, and arginine 177. The Proton acceptor role is filled by aspartate 246. Mg(2+) contacts are provided by asparagine 247 and aspartate 256. Aspartate 256 provides a ligand contact to ATP.

This sequence belongs to the SELO family. It depends on Mg(2+) as a cofactor. Mn(2+) serves as cofactor.

The catalysed reaction is L-seryl-[protein] + ATP = 3-O-(5'-adenylyl)-L-seryl-[protein] + diphosphate. The enzyme catalyses L-threonyl-[protein] + ATP = 3-O-(5'-adenylyl)-L-threonyl-[protein] + diphosphate. It carries out the reaction L-tyrosyl-[protein] + ATP = O-(5'-adenylyl)-L-tyrosyl-[protein] + diphosphate. It catalyses the reaction L-histidyl-[protein] + UTP = N(tele)-(5'-uridylyl)-L-histidyl-[protein] + diphosphate. The catalysed reaction is L-seryl-[protein] + UTP = O-(5'-uridylyl)-L-seryl-[protein] + diphosphate. The enzyme catalyses L-tyrosyl-[protein] + UTP = O-(5'-uridylyl)-L-tyrosyl-[protein] + diphosphate. In terms of biological role, nucleotidyltransferase involved in the post-translational modification of proteins. It can catalyze the addition of adenosine monophosphate (AMP) or uridine monophosphate (UMP) to a protein, resulting in modifications known as AMPylation and UMPylation. The sequence is that of Protein nucleotidyltransferase YdiU from Shigella sonnei (strain Ss046).